Reading from the N-terminus, the 496-residue chain is ATP-dependent protease ATPase subunit HslU2 (496 aa).

The N-terminal 10 residues, Met1–Cys10, are a transit peptide targeting the mitochondrion. Residues Val51 and Gly94–Glu99 each bind ATP. Residues Gly177 to Ser191 are compositionally biased toward low complexity. The segment at Gly177–Asn204 is disordered. 3 residues coordinate ATP: Asp308, Glu374, and Arg446.

It belongs to the ClpX chaperone family. HslU subfamily. In terms of assembly, a double ring-shaped homohexamer of HslV is capped on each side by a ring-shaped HslU homohexamer. The assembly of the HslU/HslV complex (HslVU) is dependent on binding of ATP.

It localises to the mitochondrion matrix. The protein localises to the kinetoplast. Its function is as follows. ATPase subunit of a proteasome-like degradation complex; this subunit has chaperone activity. The binding of ATP and its subsequent hydrolysis by HslU are essential for unfolding of protein substrates subsequently hydrolyzed by HslV. HslU recognizes the N-terminal part of its protein substrates and unfolds these before they are guided to HslV for hydrolysis. The HslVU protease complex functions in mitochondrial DNA replication by regulating DNA helicase PIF2 protein levels. The protein is ATP-dependent protease ATPase subunit HslU2 (HslU2) of Trypanosoma brucei brucei (strain 927/4 GUTat10.1).